The chain runs to 162 residues: Beta-carotene hydroxylase (162 aa).

The Fatty acid hydroxylase domain occupies 8-135; sequence VATVLVMELT…GRDHCVSFGF (128 aa).

Belongs to the sterol desaturase family.

The catalysed reaction is all-trans-beta-carotene + 4 reduced [2Fe-2S]-[ferredoxin] + 2 O2 + 4 H(+) = all-trans-zeaxanthin + 4 oxidized [2Fe-2S]-[ferredoxin] + 2 H2O. It functions in the pathway carotenoid biosynthesis; astaxanthin biosynthesis. Its function is as follows. Catalyzes the hydroxylation reaction from beta-carotene to zeaxanthin via beta-cryptoxanthin. The sequence is that of Beta-carotene hydroxylase (crtZ) from Paracoccus sp. (strain N81106 / MBIC 01143) (Agrobacterium aurantiacum).